Consider the following 225-residue polypeptide: PKHD-type hydroxylase YbiX (225 aa).

Residues 78-177 (TLSTPLFNRY…RVASFMWIQS (100 aa)) form the Fe2OG dioxygenase domain. His-96, Asp-98, and His-158 together coordinate Fe cation. Arg-168 is a binding site for 2-oxoglutarate.

Requires Fe(2+) as cofactor. It depends on L-ascorbate as a cofactor.

In Escherichia coli O17:K52:H18 (strain UMN026 / ExPEC), this protein is PKHD-type hydroxylase YbiX.